A 63-amino-acid chain; its full sequence is Venom peptide U-reduvitoxin-Pp19 (63 aa).

The first 23 residues, 1-23 (MSPYSILFVVVIALCLLPESIVG), serve as a signal peptide directing secretion. Intrachain disulfides connect Cys-15-Cys-62, Cys-25-Cys-53, and Cys-30-Cys-61.

In terms of tissue distribution, hemolymph (at protein level). Also weakly expressed by the venom gland (at protein level).

Its subcellular location is the secreted. Its function is as follows. Toxin with insecticidal activity. High doses of recombinant toxin causes impaired motor behavior of D.melanogaster, which progress slowly to paralysis and death after several hours. This is Venom peptide U-reduvitoxin-Pp19 from Pristhesancus plagipennis (Common assassin bug).